A 213-amino-acid polypeptide reads, in one-letter code: Ribosomal RNA large subunit methyltransferase E (213 aa).

S-adenosyl-L-methionine contacts are provided by Gly-60, Trp-62, Asp-80, Asp-96, and Asp-121. The active-site Proton acceptor is the Lys-161.

The protein belongs to the class I-like SAM-binding methyltransferase superfamily. RNA methyltransferase RlmE family.

It is found in the cytoplasm. It catalyses the reaction uridine(2552) in 23S rRNA + S-adenosyl-L-methionine = 2'-O-methyluridine(2552) in 23S rRNA + S-adenosyl-L-homocysteine + H(+). In terms of biological role, specifically methylates the uridine in position 2552 of 23S rRNA at the 2'-O position of the ribose in the fully assembled 50S ribosomal subunit. The protein is Ribosomal RNA large subunit methyltransferase E of Xylella fastidiosa (strain M23).